A 474-amino-acid chain; its full sequence is uncharacterized protein (474 aa).

10 consecutive transmembrane segments (helical) span residues Ile-17–Tyr-39, Phe-44–Leu-61, Leu-81–Tyr-103, Gly-144–Tyr-166, Ile-186–Phe-208, Ile-239–His-256, Ile-268–Ile-286, Leu-319–Val-341, Ala-385–Gly-407, and Ile-444–Phe-466.

This sequence belongs to the TrkH potassium transport family.

Its subcellular location is the cell membrane. This is an uncharacterized protein from Methanocaldococcus jannaschii (strain ATCC 43067 / DSM 2661 / JAL-1 / JCM 10045 / NBRC 100440) (Methanococcus jannaschii).